Here is a 350-residue protein sequence, read N- to C-terminus: (RS)-norcoclaurine 6-O-methyltransferase (350 aa).

M166 is a binding site for S-adenosyl-L-methionine. A substrate-binding site is contributed by D169. Residues T170, G195, D218, 238–239, and K252 each bind S-adenosyl-L-methionine; that span reads DM. Substrate contacts are provided by residues 253-257 and D306; that span reads CILHD. The active-site Proton acceptor is H256.

Belongs to the class I-like SAM-binding methyltransferase superfamily. Cation-independent O-methyltransferase family. COMT subfamily. Homodimer. In terms of tissue distribution, expressed in leaf primordia of rhizomes and root endodermis.

The enzyme catalyses (S)-norcoclaurine + S-adenosyl-L-methionine = (S)-coclaurine + S-adenosyl-L-homocysteine + H(+). The catalysed reaction is norcoclaurine + S-adenosyl-L-methionine = coclaurine + S-adenosyl-L-homocysteine + H(+). With respect to regulation, inhibited by sanguinarine. Functionally, involved in the biosynthesis of coclaurine, a precursor of benzylisoquinoline alkaloids. Catalyzes the transfer of the S-methyl group of S-adenosyl-L-methionine (AdoMet) to the 6-hydroxyl group of norcoclaurine to form coclaurine. This Thalictrum flavum subsp. glaucum (Yellow meadow rue) protein is (RS)-norcoclaurine 6-O-methyltransferase.